Reading from the N-terminus, the 566-residue chain is Solute carrier family 22 member 16 (566 aa).

The chain crosses the membrane as a helical span at residues 20-40 (FASAFQTISCGIHYLASVFIA). Residues asparagine 52, asparagine 60, and asparagine 112 are each glycosylated (N-linked (GlcNAc...) asparagine). The next 5 helical transmembrane spans lie at 149–169 (LIQP…GDIA), 176–196 (PIIW…AFTF), 201–221 (FVIV…VVFV), 237–257 (MHVH…GFLV), and 261–281 (WIYQ…CWML). N-linked (GlcNAc...) asparagine glycosylation occurs at asparagine 344. The next 6 helical transmembrane spans lie at 351-371 (TITV…FALN), 381-401 (LNLF…CLGM), 408-428 (NTLA…MLIP), 436-456 (IAMS…IYLY), 468-488 (LAVG…PFCV), and 493-513 (VWIF…GILT).

The protein belongs to the major facilitator (TC 2.A.1) superfamily. Organic cation transporter (TC 2.A.1.19) family.

It localises to the membrane. Functionally, high affinity carnitine transporter. The sequence is that of Solute carrier family 22 member 16 (slc22a16) from Xenopus laevis (African clawed frog).